A 520-amino-acid chain; its full sequence is Protein root UVB sensitive 4 (520 aa).

A run of 2 helical transmembrane segments spans residues 275 to 295 (IQTVCFDNLGLLLAVLLNMLF) and 301 to 321 (LQACLPFVLYPIFSTFDLLGI).

Belongs to the RUS1 family.

Its subcellular location is the membrane. This chain is Protein root UVB sensitive 4, found in Arabidopsis thaliana (Mouse-ear cress).